A 167-amino-acid polypeptide reads, in one-letter code: Peptidyl-prolyl cis-trans isomerase-like 3 (167 aa).

The PPIase cyclophilin-type domain occupies methionine 1–isoleucine 160.

The protein belongs to the cyclophilin-type PPIase family. PPIL3 subfamily.

It carries out the reaction [protein]-peptidylproline (omega=180) = [protein]-peptidylproline (omega=0). PPIases accelerate the folding of proteins. It catalyzes the cis-trans isomerization of proline imidic peptide bonds in oligopeptides. The protein is Peptidyl-prolyl cis-trans isomerase-like 3 (CYP10) of Gibberella zeae (strain ATCC MYA-4620 / CBS 123657 / FGSC 9075 / NRRL 31084 / PH-1) (Wheat head blight fungus).